A 503-amino-acid chain; its full sequence is Maturase K (503 aa).

The protein belongs to the intron maturase 2 family. MatK subfamily.

Its subcellular location is the plastid. The protein localises to the chloroplast. Usually encoded in the trnK tRNA gene intron. Probably assists in splicing its own and other chloroplast group II introns. This chain is Maturase K, found in Agonis flexuosa (Australian willow myrtle).